Here is a 631-residue protein sequence, read N- to C-terminus: Eukaryotic translation initiation factor 2-alpha kinase 1 (631 aa).

A disordered region spans residues 1-34 (MQGGNSGVRKREEEGGGEGAVAAPPAIDFPAESS). Residues 85-104 (LRSRQVFKLLCQTFIKMGLL) carry the SIFI-degron motif. One can recognise a Protein kinase domain in the interval 167-583 (FEEVAILGKG…AVQLLQSELF (417 aa)). ATP is bound by residues 173–181 (LGKGGYGRV) and Lys196. The disordered stretch occupies residues 260-301 (QEEDREQYDVKNDESSSSSIVFAEPTPEKGKRFGESDTENQN). Thr285 carries the phosphothreonine modification. Basic and acidic residues predominate over residues 285–301 (TPEKGKRFGESDTENQN). One copy of the HRM 1 repeat lies at 410 to 415 (ACPYVM). Residue Asp442 is the Proton acceptor of the active site. Thr486 and Thr488 each carry phosphothreonine; by autocatalysis. Position 493 is a phosphothreonine (Thr493). The HRM 2 repeat unit spans residues 552–557 (RCPVQA).

The protein belongs to the protein kinase superfamily. Ser/Thr protein kinase family. GCN2 subfamily. As to quaternary structure, synthesized in an inactive form that binds to the N-terminal domain of CDC37. Has to be associated with a multiprotein complex containing Hsp90, CDC37 and PPP5C for maturation and activation by autophosphorylation. The phosphatase PPP5C modulates this activation. Homodimer; homodimerizes in presence of heme, forming a disulfide-linked inactive homodimer. Interacts with DELE1; binds both to full-length DELE1 and processed form of DELE1 (S-DELE1) in response to stress, leading to activate its protein kinase activity and trigger the integrated stress response (ISR). Activated by autophosphorylation; phosphorylated predominantly on serine and threonine residues, but also on tyrosine residues. Autophosphorylation at Thr-488 is required for kinase activation. The active autophosphorylated form apparently is largely refractory to cellular heme fluctuations. Post-translationally, ubiquitinated and degraded by the SIFI complex once the mitochondrial stress has been resolved, thereby providing stress response silencing. Within the SIFI complex, UBR4 initiates ubiquitin chain that are further elongated or branched by KCMF1.

The protein resides in the cytoplasm. The catalysed reaction is L-seryl-[protein] + ATP = O-phospho-L-seryl-[protein] + ADP + H(+). It catalyses the reaction L-threonyl-[protein] + ATP = O-phospho-L-threonyl-[protein] + ADP + H(+). With respect to regulation, in normal conditions, the protein kinase activity is inhibited; inhibition is relieved by various stress conditions. Inhibited by heme: in presence of heme, forms a disulfide-linked inactive homodimer. Heme depletion relieves inhibition and stimulates kinase activity by autophosphorylation. Inhibited by the heme metabolites biliverdin and bilirubin. Induced by oxidative stress generated by arsenite treatment. Binding of nitric oxide (NO) to the heme iron in the N-terminal heme-binding domain activates the kinase activity, while binding of carbon monoxide (CO) suppresses kinase activity. Protein kinase activity is also activated upon binding to DELE1 in response to various stress, triggering the integrated stress response (ISR): activated by full-length DELE1 in response to iron deficiency, while it is activated by the processed form of DELE1 (S-DELE1) in response to mitochondrial stress. Metabolic-stress sensing protein kinase that phosphorylates the alpha subunit of eukaryotic translation initiation factor 2 (EIF2S1/eIF-2-alpha) in response to various stress conditions. Key activator of the integrated stress response (ISR) required for adaptation to various stress, such as heme deficiency, oxidative stress, osmotic shock, mitochondrial dysfunction and heat shock. EIF2S1/eIF-2-alpha phosphorylation in response to stress converts EIF2S1/eIF-2-alpha in a global protein synthesis inhibitor, leading to a global attenuation of cap-dependent translation, while concomitantly initiating the preferential translation of ISR-specific mRNAs, such as the transcriptional activator ATF4, and hence allowing ATF4-mediated reprogramming. Acts as a key sensor of heme-deficiency: in normal conditions, binds hemin via a cysteine thiolate and histidine nitrogenous coordination, leading to inhibit the protein kinase activity. This binding occurs with moderate affinity, allowing it to sense the heme concentration within the cell: heme depletion relieves inhibition and stimulates kinase activity, activating the ISR. Thanks to this unique heme-sensing capacity, plays a crucial role to shut off protein synthesis during acute heme-deficient conditions. In red blood cells (RBCs), controls hemoglobin synthesis ensuring a coordinated regulation of the synthesis of its heme and globin moieties. It thereby plays an essential protective role for RBC survival in anemias of iron deficiency. Iron deficiency also triggers activation by full-length DELE1. Also activates the ISR in response to mitochondrial dysfunction: HRI/EIF2AK1 protein kinase activity is activated upon binding to the processed form of DELE1 (S-DELE1), thereby promoting the ATF4-mediated reprogramming. Also acts as an activator of mitophagy in response to mitochondrial damage: catalyzes phosphorylation of eIF-2-alpha (EIF2S1) following activation by S-DELE1, thereby promoting mitochondrial localization of EIF2S1, triggering PRKN-independent mitophagy. The polypeptide is Eukaryotic translation initiation factor 2-alpha kinase 1 (Macaca fascicularis (Crab-eating macaque)).